The chain runs to 125 residues: Protein ApaG (125 aa).

Residues 1–125 enclose the ApaG domain; that stretch reads MFTSSKVAIQ…FRLAIPTLIN (125 aa).

This is Protein ApaG from Proteus mirabilis (strain HI4320).